A 198-amino-acid chain; its full sequence is Small ribosomal subunit protein uS4 (198 aa).

Residues 91–151 (SRLDNIVYRL…EKSKNLKIVE (61 aa)) form the S4 RNA-binding domain.

This sequence belongs to the universal ribosomal protein uS4 family. In terms of assembly, part of the 30S ribosomal subunit. Contacts protein S5. The interaction surface between S4 and S5 is involved in control of translational fidelity.

One of the primary rRNA binding proteins, it binds directly to 16S rRNA where it nucleates assembly of the body of the 30S subunit. Functionally, with S5 and S12 plays an important role in translational accuracy. The chain is Small ribosomal subunit protein uS4 from Phytoplasma australiense.